Reading from the N-terminus, the 405-residue chain is Probable tRNA sulfurtransferase (405 aa).

A THUMP domain is found at 60–165 (TAVMDRLKGV…LNGVFLSGQT (106 aa)). ATP-binding positions include 183-184 (ML), 208-209 (HF), arginine 265, glycine 287, and glutamine 296.

This sequence belongs to the ThiI family.

Its subcellular location is the cytoplasm. The catalysed reaction is [ThiI sulfur-carrier protein]-S-sulfanyl-L-cysteine + a uridine in tRNA + 2 reduced [2Fe-2S]-[ferredoxin] + ATP + H(+) = [ThiI sulfur-carrier protein]-L-cysteine + a 4-thiouridine in tRNA + 2 oxidized [2Fe-2S]-[ferredoxin] + AMP + diphosphate. It catalyses the reaction [ThiS sulfur-carrier protein]-C-terminal Gly-Gly-AMP + S-sulfanyl-L-cysteinyl-[cysteine desulfurase] + AH2 = [ThiS sulfur-carrier protein]-C-terminal-Gly-aminoethanethioate + L-cysteinyl-[cysteine desulfurase] + A + AMP + 2 H(+). It participates in cofactor biosynthesis; thiamine diphosphate biosynthesis. Its function is as follows. Catalyzes the ATP-dependent transfer of a sulfur to tRNA to produce 4-thiouridine in position 8 of tRNAs, which functions as a near-UV photosensor. Also catalyzes the transfer of sulfur to the sulfur carrier protein ThiS, forming ThiS-thiocarboxylate. This is a step in the synthesis of thiazole, in the thiamine biosynthesis pathway. The sulfur is donated as persulfide by IscS. This chain is Probable tRNA sulfurtransferase, found in Levilactobacillus brevis (strain ATCC 367 / BCRC 12310 / CIP 105137 / JCM 1170 / LMG 11437 / NCIMB 947 / NCTC 947) (Lactobacillus brevis).